The sequence spans 315 residues: Porphobilinogen deaminase (315 aa).

Cysteine 242 is modified (S-(dipyrrolylmethanemethyl)cysteine).

This sequence belongs to the HMBS family. Monomer. It depends on dipyrromethane as a cofactor.

The enzyme catalyses 4 porphobilinogen + H2O = hydroxymethylbilane + 4 NH4(+). It functions in the pathway porphyrin-containing compound metabolism; protoporphyrin-IX biosynthesis; coproporphyrinogen-III from 5-aminolevulinate: step 2/4. Tetrapolymerization of the monopyrrole PBG into the hydroxymethylbilane pre-uroporphyrinogen in several discrete steps. The protein is Porphobilinogen deaminase of Syntrophotalea carbinolica (strain DSM 2380 / NBRC 103641 / GraBd1) (Pelobacter carbinolicus).